Here is a 272-residue protein sequence, read N- to C-terminus: SWIRM domain-containing protein laf2 (272 aa).

The disordered stretch occupies residues 86–148 (HVGRWANRHS…RRRKSARGNG (63 aa)). Composition is skewed to low complexity over residues 95-120 (SNVS…SYSG) and 127-136 (RSISSSPSTI). Phosphoserine occurs at positions 130 and 132. Thr135 carries the phosphothreonine modification. The SWIRM domain occupies 182 to 272 (LKAEWKGPPL…AFHEVGFFDD (91 aa)).

As to quaternary structure, component of the RPD3C(L) complex.

It is found in the nucleus. Its function is as follows. Component of the RPD3C(L) histone deacetylase complex (HDAC) responsible for the deacetylation of lysine residues on the N-terminal part of the core histones (H2A, H2B, H3 and H4). Histone deacetylation gives a tag for epigenetic repression and plays an important role in transcriptional regulation, cell cycle progression and developmental events. The chain is SWIRM domain-containing protein laf2 (laf2) from Schizosaccharomyces pombe (strain 972 / ATCC 24843) (Fission yeast).